The primary structure comprises 276 residues: 2-hydroxy-6-oxo-2,4-heptadienoate hydrolase (276 aa).

Residues 28 to 259 (NPVVLVHGSG…GRCGHWVQIE (232 aa)) enclose the AB hydrolase-1 domain. Catalysis depends on residues S105, D226, and H254.

It belongs to the DmpD/TodF/XylF esterase family.

It carries out the reaction (2Z,4E)-2-hydroxy-6-oxohepta-2,4-dienoate + H2O = (2Z)-2-hydroxypenta-2,4-dienoate + acetate + H(+). It functions in the pathway xenobiotic degradation; toluene degradation. Its function is as follows. Catalyzes the hydrolysis of 2-hydroxy-6-oxohepta-2,4-dienoate into 2-hydroxypenta-2,4-dienoate and acetate. In Pseudomonas putida (strain ATCC 700007 / DSM 6899 / JCM 31910 / BCRC 17059 / LMG 24140 / F1), this protein is 2-hydroxy-6-oxo-2,4-heptadienoate hydrolase (todF).